The sequence spans 540 residues: Glucose-6-phosphate isomerase (540 aa).

Glu-350 serves as the catalytic Proton donor. Active-site residues include His-381 and Lys-503.

The protein belongs to the GPI family.

The protein resides in the cytoplasm. It carries out the reaction alpha-D-glucose 6-phosphate = beta-D-fructose 6-phosphate. It functions in the pathway carbohydrate biosynthesis; gluconeogenesis. It participates in carbohydrate degradation; glycolysis; D-glyceraldehyde 3-phosphate and glycerone phosphate from D-glucose: step 2/4. Its function is as follows. Catalyzes the reversible isomerization of glucose-6-phosphate to fructose-6-phosphate. The polypeptide is Glucose-6-phosphate isomerase (Burkholderia multivorans (strain ATCC 17616 / 249)).